The primary structure comprises 627 residues: Pro-interleukin-16 (627 aa).

Disordered stretches follow at residues 34–136 (HMPL…SIKQ), 162–267 (SSGE…LTRS), and 316–337 (GASPTSLSNEDSAANGCAETSG). Phosphoserine is present on serine 217. Polar residues predominate over residues 318–337 (SPTSLSNEDSAANGCAETSG). Positions 401–497 (KQLDSIHVTI…IVTRKLTPET (97 aa)) are interaction with PPP1R12A, PPP1R12B and PPP1R12C. PDZ domains lie at 407-492 (HVTI…VTRK) and 529-614 (TVTL…IKRK).

As to quaternary structure, homotetramer. Pro-interleukin-16 interacts (via PDZ 2 domain) with PPP1R12A, PPP1R12B and PPP1R12C. Pro-interleukin-16 interacts with GRIN2A. Pro-interleukin-16 interacts with GABPB1. Pro-interleukin-16 interacts (via PDZ 3 domain) with HDAC3.

The protein localises to the secreted. It is found in the cytoplasm. Its subcellular location is the nucleus. Interleukin-16 stimulates a migratory response in CD4+ lymphocytes, monocytes, and eosinophils. Primes CD4+ T-cells for IL-2 and IL-15 responsiveness. Also induces T-lymphocyte expression of interleukin 2 receptor. Ligand for CD4. Its function is as follows. Pro-interleukin-16 is involved in cell cycle progression in T-cells. Appears to be involved in transcriptional regulation of SKP2 and is probably part of a transcriptional repression complex on the core promoter of the SKP2 gene. May act as a scaffold for GABPB1 (the DNA-binding subunit the GABP transcription factor complex) and HDAC3 thus maintaining transcriptional repression and blocking cell cycle progression in resting T-cells. The polypeptide is Pro-interleukin-16 (IL16) (Saimiri sciureus (Common squirrel monkey)).